The chain runs to 843 residues: Transmembrane protease serine 7 (843 aa).

The Cytoplasmic portion of the chain corresponds to 1–76 (MDKENSDVSA…KVPFWNVQNK (76 aa)). Residues 27-67 (AQKKLPVRRPPLPGRRLPLPGRRPPQRPIGKAKPKKQSKKK) form a disordered region. The span at 56 to 67 (GKAKPKKQSKKK) shows a compositional bias: basic residues. Residues 77–97 (IILFTVFLFILAVIAWTLLWL) form a helical; Signal-anchor for type II membrane protein membrane-spanning segment. Topologically, residues 98 to 843 (YISKTESKDA…WIHKYVPSLL (746 aa)) are extracellular. The 129-residue stretch at 106–234 (DAFYFAGMFR…DSVVLNAGLR (129 aa)) folds into the SEA domain. 12 disulfides stabilise this stretch: cysteine 247–cysteine 273, cysteine 299–cysteine 322, cysteine 365–cysteine 396, cysteine 484–cysteine 496, cysteine 491–cysteine 509, cysteine 503–cysteine 518, cysteine 525–cysteine 544, cysteine 538–cysteine 553, cysteine 559–cysteine 571, cysteine 566–cysteine 585, cysteine 579–cysteine 594, and cysteine 631–cysteine 647. 2 consecutive CUB domains span residues 247 to 360 (CSQY…FEVI) and 365 to 481 (CENT…YNIS). LDL-receptor class A domains lie at 483-519 (PCPV…LFCV), 517-554 (FCVS…QNCT), and 558-595 (PCNN…EGCT). Residues 606-840 (IIGGTDTLEG…FVPWIHKYVP (235 aa)) enclose the Peptidase S1 domain. Catalysis depends on charge relay system residues histidine 646 and aspartate 694. Cystine bridges form between cysteine 730/cysteine 796 and cysteine 762/cysteine 775. Serine 790 acts as the Charge relay system in catalysis.

This sequence belongs to the peptidase S1 family. As to quaternary structure, forms a heterodimer with SERPINA5. In terms of processing, N-glycosylated. As to expression, expressed in brain, ovary, testis, salivary gland, trachea and lung.

It localises to the cell membrane. Its function is as follows. Serine protease which preferentially hydrolyzes peptides with Arg at the P1 position. This is Transmembrane protease serine 7 (TMPRSS7) from Homo sapiens (Human).